The chain runs to 385 residues: GDSL esterase/lipase 5 (385 aa).

The first 35 residues, 1-35, serve as a signal peptide directing secretion; it reads MRESTLMEKVTRRTISSFIFFIVSSTILFLAGKSS. The N-linked (GlcNAc...) asparagine glycan is linked to asparagine 45. The active-site Nucleophile is serine 55. N-linked (GlcNAc...) asparagine glycans are attached at residues asparagine 66, asparagine 194, asparagine 211, and asparagine 289. Catalysis depends on residues aspartate 345 and histidine 348.

This sequence belongs to the 'GDSL' lipolytic enzyme family.

The protein localises to the secreted. The polypeptide is GDSL esterase/lipase 5 (GLIP5) (Arabidopsis thaliana (Mouse-ear cress)).